The primary structure comprises 86 residues: Conotoxin S6.10 (86 aa).

An N-terminal signal peptide occupies residues methionine 1–alanine 22. Residues lysine 23–threonine 45 constitute a propeptide that is removed on maturation. Intrachain disulfides connect cysteine 48-cysteine 62, cysteine 55-cysteine 66, and cysteine 61-cysteine 73.

This sequence belongs to the conotoxin O1 superfamily. Expressed by the venom duct.

It is found in the secreted. The chain is Conotoxin S6.10 from Conus striatus (Striated cone).